Reading from the N-terminus, the 144-residue chain is Fluoride-specific ion channel FluC (144 aa).

The next 4 membrane-spanning stretches (helical) occupy residues 7 to 27 (LIVM…SVAA), 33 to 53 (FIPW…IGFF), 71 to 91 (LFVM…SLQT), and 105 to 125 (VNVA…HITA). Positions 79 and 82 each coordinate Na(+).

The protein belongs to the fluoride channel Fluc/FEX (TC 1.A.43) family.

The protein localises to the cell inner membrane. The catalysed reaction is fluoride(in) = fluoride(out). Na(+) is not transported, but it plays an essential structural role and its presence is essential for fluoride channel function. Fluoride-specific ion channel. Important for reducing fluoride concentration in the cell, thus reducing its toxicity. The polypeptide is Fluoride-specific ion channel FluC (Gluconobacter oxydans (strain 621H) (Gluconobacter suboxydans)).